We begin with the raw amino-acid sequence, 482 residues long: 3-isopropylmalate dehydratase large subunit (482 aa).

The segment at 60 to 79 (ATPDHNVPTTRAERQGGLES) is disordered. The [4Fe-4S] cluster site is built by cysteine 353, cysteine 414, and cysteine 417.

It belongs to the aconitase/IPM isomerase family. LeuC type 1 subfamily. Heterodimer of LeuC and LeuD. [4Fe-4S] cluster is required as a cofactor.

It carries out the reaction (2R,3S)-3-isopropylmalate = (2S)-2-isopropylmalate. It participates in amino-acid biosynthesis; L-leucine biosynthesis; L-leucine from 3-methyl-2-oxobutanoate: step 2/4. Functionally, catalyzes the isomerization between 2-isopropylmalate and 3-isopropylmalate, via the formation of 2-isopropylmaleate. In Xanthomonas euvesicatoria pv. vesicatoria (strain 85-10) (Xanthomonas campestris pv. vesicatoria), this protein is 3-isopropylmalate dehydratase large subunit.